A 437-amino-acid polypeptide reads, in one-letter code: MPVIDETPMTYTEACRYFPGGVNSPIRACIPVGIVPPIVSSASRDVFIDSFGKNFIDFCGSWGSLIHGHSHPKILDALCSAASQGTSYGLTSENEISLATTLFSCLGLQDHKLRFVSSGTEAAMTSVRLACGVTQRSVMIKFLGCYHGHADVLLKGMTIDENNLMEVPHLVDRYFSSDPCLPLTLILPYNDLKTFEEVMEKIGERVACVIFEPIAINMGVVLPEAGWIESIITTCRRYGALSIMDEVVTGFRMGSRGMRSILDVTPDITVYGKILGGGMPVAAVLAHQSIMEHLMPVGTVFQAGTLSGNPIAMAAGQASIELCQERDFYPKLENLTEGFLSPIEDFIRCKGFPIALVRAGSMFSFFFRETPPRNLRDVQECDQKTFGIFYRHAFSRGVYLSPASMEASFISSVHSRENLAYTQNVLIDSLVKTFEGI.

At Lys-273 the chain carries N6-(pyridoxal phosphate)lysine.

The protein belongs to the class-III pyridoxal-phosphate-dependent aminotransferase family. HemL subfamily. As to quaternary structure, homodimer. Pyridoxal 5'-phosphate serves as cofactor.

It localises to the cytoplasm. It catalyses the reaction (S)-4-amino-5-oxopentanoate = 5-aminolevulinate. The protein operates within porphyrin-containing compound metabolism; protoporphyrin-IX biosynthesis; 5-aminolevulinate from L-glutamyl-tRNA(Glu): step 2/2. This is Glutamate-1-semialdehyde 2,1-aminomutase from Chlamydia caviae (strain ATCC VR-813 / DSM 19441 / 03DC25 / GPIC) (Chlamydophila caviae).